We begin with the raw amino-acid sequence, 249 residues long: Proteasome subunit alpha (249 aa).

Residues E229–D249 are disordered.

This sequence belongs to the peptidase T1A family. As to quaternary structure, the 20S proteasome core is composed of 14 alpha and 14 beta subunits that assemble into four stacked heptameric rings, resulting in a barrel-shaped structure. The two inner rings, each composed of seven catalytic beta subunits, are sandwiched by two outer rings, each composed of seven alpha subunits. The catalytic chamber with the active sites is on the inside of the barrel. Has a gated structure, the ends of the cylinder being occluded by the N-termini of the alpha-subunits. Is capped by the proteasome-associated ATPase, ARC.

It localises to the cytoplasm. It participates in protein degradation; proteasomal Pup-dependent pathway. Its activity is regulated as follows. The formation of the proteasomal ATPase ARC-20S proteasome complex, likely via the docking of the C-termini of ARC into the intersubunit pockets in the alpha-rings, may trigger opening of the gate for substrate entry. Interconversion between the open-gate and close-gate conformations leads to a dynamic regulation of the 20S proteasome proteolysis activity. In terms of biological role, component of the proteasome core, a large protease complex with broad specificity involved in protein degradation. This Thermobifida fusca (strain YX) protein is Proteasome subunit alpha.